A 720-amino-acid polypeptide reads, in one-letter code: Zinc finger protein 408 (720 aa).

A disordered region spans residues 201–350; it reads VQQEVASPGE…GPAGSSPKQG (150 aa). A compositionally biased stretch (polar residues) spans 275–285; it reads LQSNSATQQDP. Positions 287–296 are enriched in low complexity; it reads GSGASFSSSA. At Thr-322 the chain carries Phosphothreonine. 10 consecutive C2H2-type zinc fingers follow at residues 353–375, 381–403, 409–431, 437–459, 468–490, 496–518, 524–546, 551–573, 579–601, and 607–629; these read YRCGECGKAFLQLCHLKKHAFVH, FLCTECGKSYSSEESFKAHMLGH, FPCPQCDKAYGTQRDLKEHQVVH, FACDQCGKAFARRPSLRLHRKTH, CPCPVCGRPLANQGSLRNHMRLH, FLCPHCGRAFRQRGNLRGHLRLH, YRCPHCADAFPQLPELRRHLISH, HLCPVCGKALRDPHTLRAHERLH, FPCPQCGRAYTLATKLRRHLKSH, and YRCPTCGMGYTLPQSLRRHQLSH.

In terms of tissue distribution, highest expression is observed in adult retina; abundantly expressed in the fetal eye. In the retina, it is detected in the outer nuclear layer, especially cone and rod photoreceptor cells, ganglion cell layer and both outer and inner plexiform layers (at protein level). Expressed in retinal blood vessels (at protein level).

Its subcellular location is the nucleus. In terms of biological role, may be involved in transcriptional regulation. The chain is Zinc finger protein 408 (ZNF408) from Homo sapiens (Human).